The primary structure comprises 740 residues: Elongation factor 2 (740 aa).

Residues 18–263 (EQVRNIGIIA…MVVRWVPNPR (246 aa)) form the tr-type G domain. GTP-binding positions include 27–34 (AHVDHGKT), 93–97 (DTPGH), and 147–150 (NKVD). His-606 carries the diphthamide modification.

Belongs to the TRAFAC class translation factor GTPase superfamily. Classic translation factor GTPase family. EF-G/EF-2 subfamily.

Its subcellular location is the cytoplasm. Its function is as follows. Catalyzes the GTP-dependent ribosomal translocation step during translation elongation. During this step, the ribosome changes from the pre-translocational (PRE) to the post-translocational (POST) state as the newly formed A-site-bound peptidyl-tRNA and P-site-bound deacylated tRNA move to the P and E sites, respectively. Catalyzes the coordinated movement of the two tRNA molecules, the mRNA and conformational changes in the ribosome. In Ignicoccus hospitalis (strain KIN4/I / DSM 18386 / JCM 14125), this protein is Elongation factor 2.